We begin with the raw amino-acid sequence, 89 residues long: UPF0297 protein MGAS9429_Spy1808 (89 aa).

This sequence belongs to the UPF0297 family.

In Streptococcus pyogenes serotype M12 (strain MGAS9429), this protein is UPF0297 protein MGAS9429_Spy1808.